The following is a 29-amino-acid chain: Glucagon (29 aa).

The residue at position 2 (serine 2) is a Phosphoserine.

It belongs to the glucagon family.

It is found in the secreted. In terms of biological role, glucagon plays a key role in glucose metabolism and homeostasis. Regulates blood glucose by increasing gluconeogenesis and decreasing glycolysis. The chain is Glucagon (GCG) from Chinchilla chinchilla (Short-tailed chinchilla).